We begin with the raw amino-acid sequence, 402 residues long: MSDVKKVVLAYSGGLDTSVILQWLRETYDCEVVTFTADLGQGEELEPARKKAEAFGIKEIYIDDLREEFVRDFVFPMFRANAIYEGEYLLGTSIARPLIAKRQVEIARETGADAVSHGATGKGNDQVRFELGYYGLEPNIKVIAPWREWDLNSREKLLAYAEKHGISIEGKQSGGSPYSMDANLLHISYEGGVLEDTWTECEEAMWRWTRSPEAAPDEAQYIDIEFQGGDPVSIDGEKLSPAALLSRLNDLGAMHGVGRIDIVENRYVGMKSRGCYETPGGTILLRAHRAIESITLDRESAHLKDEVMPKYAELIYNGYWWSPEREAMQALIDATQRRVNGVVRLKLYKGNVIVVGRDSANDSLFDQTIATFEDDRGAYDQKDAEGFIRLNALRLRIAQRRG.

Residues 10 to 18 (AYSGGLDTS) and Ala-37 contribute to the ATP site. Residues Tyr-88 and Ser-93 each coordinate L-citrulline. Gly-118 serves as a coordination point for ATP. The L-aspartate site is built by Thr-120, Asn-124, and Asp-125. Asn-124 lines the L-citrulline pocket. Residues Arg-128, Ser-179, Ser-188, Glu-264, and Tyr-276 each coordinate L-citrulline.

Belongs to the argininosuccinate synthase family. Type 1 subfamily. As to quaternary structure, homotetramer.

Its subcellular location is the cytoplasm. It carries out the reaction L-citrulline + L-aspartate + ATP = 2-(N(omega)-L-arginino)succinate + AMP + diphosphate + H(+). Its pathway is amino-acid biosynthesis; L-arginine biosynthesis; L-arginine from L-ornithine and carbamoyl phosphate: step 2/3. This is Argininosuccinate synthase from Alkalilimnicola ehrlichii (strain ATCC BAA-1101 / DSM 17681 / MLHE-1).